The following is a 445-amino-acid chain: Phosphoglucosamine mutase (445 aa).

Ser101 (phosphoserine intermediate) is an active-site residue. Mg(2+) is bound by residues Ser101, Asp240, Asp242, and Asp244. Ser101 bears the Phosphoserine mark.

This sequence belongs to the phosphohexose mutase family. Mg(2+) serves as cofactor. Activated by phosphorylation.

The enzyme catalyses alpha-D-glucosamine 1-phosphate = D-glucosamine 6-phosphate. Catalyzes the conversion of glucosamine-6-phosphate to glucosamine-1-phosphate. This Pseudomonas fluorescens (strain SBW25) protein is Phosphoglucosamine mutase.